The sequence spans 437 residues: MDKKFYITTLGCPKNIADSMSMHHSLLEEGFTLASLPEESDFHFINTCTFIQSATEETIQTILSAAQVKKQNHQKLVVVGCFAERYPDNIHSEIPEVDLFFGTGKYSQAGKILREKFPELSPSQLEFNDSLLERWKLSSKIENYSKPYAYVKVSDGCNRGCSFCIIPSFRGKFVESPLDDILRDTNRAIRAGAKEICLVSQDTVYYGRDSEILLDMVRKVAEIDSLEILRLLYLYPDKKTEKLIRLMGETSKIAPYLESPLQHVSSKILKVMNRTGESSYFKDLFSLAREVKPGLEIRTSFIIGYPGEEPEDVDQILRFIEDTRPEKVNLFSYSPQEGTKGAQLKQTVSEKEKSKRINLIRDSHLEILEEIHESRIGRTYDAIVDGIEDGQVVVRRFQDAPEMDEVVYVDDVSLIPGRIGKVRIDSFYEYDMNGTWV.

The region spanning 3–118 (KKFYITTLGC…AGKILREKFP (116 aa)) is the MTTase N-terminal domain. 6 residues coordinate [4Fe-4S] cluster: C12, C48, C81, C157, C161, and C164. A Radical SAM core domain is found at 143–370 (NYSKPYAYVK…RDSHLEILEE (228 aa)). One can recognise a TRAM domain in the interval 373-437 (ESRIGRTYDA…YEYDMNGTWV (65 aa)).

It belongs to the methylthiotransferase family. RimO subfamily. Requires [4Fe-4S] cluster as cofactor.

The protein localises to the cytoplasm. It catalyses the reaction L-aspartate(89)-[ribosomal protein uS12]-hydrogen + (sulfur carrier)-SH + AH2 + 2 S-adenosyl-L-methionine = 3-methylsulfanyl-L-aspartate(89)-[ribosomal protein uS12]-hydrogen + (sulfur carrier)-H + 5'-deoxyadenosine + L-methionine + A + S-adenosyl-L-homocysteine + 2 H(+). Catalyzes the methylthiolation of an aspartic acid residue of ribosomal protein uS12. In Leptospira interrogans serogroup Icterohaemorrhagiae serovar Lai (strain 56601), this protein is Ribosomal protein uS12 methylthiotransferase RimO.